The primary structure comprises 154 residues: IQ domain-containing protein F3 (154 aa).

An IQ domain is found at 89-118; that stretch reads QEQATVKLQSCIRMWQCRQCYRQMCNALCL.

The chain is IQ domain-containing protein F3 (IQCF3) from Homo sapiens (Human).